A 374-amino-acid chain; its full sequence is Chaperone protein DnaJ (374 aa).

Positions 5–70 (DYYEVLGVNL…RKRASYDQFG (66 aa)) constitute a J domain. The CR-type zinc-finger motif lies at 133-210 (GLSRTIKVPT…CHGQGRQQQT (78 aa)). Positions 146, 149, 162, 165, 184, 187, 198, and 201 each coordinate Zn(2+). CXXCXGXG motif repeat units follow at residues 146 to 153 (CKTCNGSG), 162 to 169 (CPRCNGSG), 184 to 191 (CSVCRGRG), and 198 to 205 (CTDCHGQG).

It belongs to the DnaJ family. As to quaternary structure, homodimer. Zn(2+) is required as a cofactor.

It is found in the cytoplasm. Functionally, participates actively in the response to hyperosmotic and heat shock by preventing the aggregation of stress-denatured proteins and by disaggregating proteins, also in an autonomous, DnaK-independent fashion. Unfolded proteins bind initially to DnaJ; upon interaction with the DnaJ-bound protein, DnaK hydrolyzes its bound ATP, resulting in the formation of a stable complex. GrpE releases ADP from DnaK; ATP binding to DnaK triggers the release of the substrate protein, thus completing the reaction cycle. Several rounds of ATP-dependent interactions between DnaJ, DnaK and GrpE are required for fully efficient folding. Also involved, together with DnaK and GrpE, in the DNA replication of plasmids through activation of initiation proteins. The polypeptide is Chaperone protein DnaJ (Coxiella burnetii (strain RSA 493 / Nine Mile phase I)).